The sequence spans 297 residues: T-cell leukemia homeobox protein 3 (297 aa).

The segment at M1 to Y68 is disordered. A compositionally biased stretch (pro residues) spans A32–G52. Positions R172–T231 form a DNA-binding region, homeobox.

In terms of tissue distribution, expression is restricted to neurons in the peripheral and central nervous system.

The protein localises to the nucleus. Its function is as follows. Seems to be involved in the development of cranial sensory innervation from peripheral ganglia. This chain is T-cell leukemia homeobox protein 3 (TLX3), found in Gallus gallus (Chicken).